The chain runs to 49 residues: uncharacterized protein (49 aa).

Residues 31–48 form a helical membrane-spanning segment; sequence PDLYTIIVSYFSIFSLFF.

The protein resides in the membrane. This is an uncharacterized protein from Saccharomyces cerevisiae (strain ATCC 204508 / S288c) (Baker's yeast).